The primary structure comprises 92 residues: WAP four-disulfide core domain protein 12 (92 aa).

The first 23 residues, 1–23 (MGSSRFLVLMVSLALVTLVAAEG), serve as a signal peptide directing secretion. Positions 27–74 (NIEKPEVCPADNVRCIKSDPPQCHTDQDCQGIRKCCYLHCGFKCVIPV) constitute a WAP domain. 4 disulfides stabilise this stretch: cysteine 34/cysteine 62, cysteine 41/cysteine 66, cysteine 49/cysteine 61, and cysteine 55/cysteine 70.

It is found in the secreted. Functionally, antibacterial protein. Putative acid-stable proteinase inhibitor. This Aotus nancymaae (Ma's night monkey) protein is WAP four-disulfide core domain protein 12 (WFDC12).